The chain runs to 138 residues: Large ribosomal subunit protein uL16 (138 aa).

The protein belongs to the universal ribosomal protein uL16 family. As to quaternary structure, part of the 50S ribosomal subunit.

Binds 23S rRNA and is also seen to make contacts with the A and possibly P site tRNAs. The sequence is that of Large ribosomal subunit protein uL16 from Hyphomonas neptunium (strain ATCC 15444).